The following is a 562-amino-acid chain: F-box only protein 33 (562 aa).

The 47-residue stretch at Ala68–Leu114 folds into the F-box domain. Positions Gly155 to Gly173 are enriched in gly residues. The disordered stretch occupies residues Gly155 to Gly176.

As to quaternary structure, part of the SCF (SKP1-CUL1-F-box) E3 ubiquitin-protein ligase complex SCF(FBXO33) formed of CUL1, SKP1, RBX1 and FBXO33. Interacts via its N-terminus with YBX1 CSD domain. Directly interacts with SKP1 and CUL1.

The protein operates within protein modification; protein ubiquitination. Its function is as follows. Substrate recognition component of a SCF (SKP1-CUL1-F-box protein) E3 ubiquitin-protein ligase complex which mediates the ubiquitination and subsequent proteasomal degradation of target proteins. Probably recognizes and binds to phosphorylated target proteins. Recognizes YBX1. The chain is F-box only protein 33 (Fbxo33) from Mus musculus (Mouse).